A 712-amino-acid chain; its full sequence is MHKKQLMALLMVPQTSDSQDATITKLESAYSDLESLLRSSKQMEQNIETMETRFDLLHGSITTASRRVHPLQSLSMSRKALDTRINRAISPALALLETFKLAESLQNNLLNLSSKLSTEKTHQKRLSKLLDYMDCVDQLNEAINSISEVVEPVIMRLQEVVEFISRTKAADQYRTQRLREALITLKALYETEVDEMRFEGLLDQALLHMQDEFEVLLLKLKHRKLGDMSHMQNGGEDCDDHFEVSFELGSELEIEVLRRISNTLAANDCLDICIDIYVKVRYKRAAKALMKLNPDYLRTYTPEGIDEMEWENLETSITLWTQHFEVATKKVLLSEKKLCESVLGEIIDGLIHPECFVKISDKIMAVFFRFGEGVARSNKEPQKLFKLLDMFESLEKLKPYVLEIFDGESGEDICARFRELEKLIIDASSKVFWEFGLQIEGNVDGFLPPPQDGSVPKIVRYAVNYLKYLSTENYRTTMAKVLRTELTWKTELMLSSKQSETDEDLLKHAICNVMEALQRNIESKRLSCKDKILVNIFMMNTYWYMYMRTKNTELGDLLGEKYIKESYKAVAEESAYLYQKQAWLVLVKILDQDDDDIKEQKQGKEKSIGRLVNEKIETFFKCLSEICDRHRSFYSIPDVDLREQMRDSTVKLLVPVYAEFLESYSGFLQRKVYPSPQRLQGLLGKAFGSTNDWNLNGGRNSGSLETDIRRSR.

The signal sequence occupies residues 1–18 (MHKKQLMALLMVPQTSDS). Residues 26–53 (LESAYSDLESLLRSSKQMEQNIETMETR) are a coiled coil. Asn-111 is a glycosylation site (N-linked (GlcNAc...) asparagine).

It belongs to the EXO70 family. Subunit of the exocyst complex that mediates vesicle tethering during exocytosis. Interacts with VPY at the periarbuscular membrane (PAM) around the arbuscule hyphal tips. As to expression, present at low levels in non-mycorrhizal root tips.

It is found in the cell membrane. Its function is as follows. Component of an exocyst subcomplex specifically required for periarbuscular membrane (PAM) biogenesis during arbuscular mycorrhizal (AM) symbiosis with AM fungi (e.g. Glomus versiforme), especially critical during the early branching phase of arbuscule development; probably involved in STR and STR2 delivery into the PAM. The polypeptide is Exocyst complex component EXO70I (Medicago truncatula (Barrel medic)).